The primary structure comprises 72 residues: uncharacterized protein (72 aa).

The next 2 helical transmembrane spans lie at 15 to 35 and 50 to 70; these read WEIL…IGSI and ILIY…MYFI.

Its subcellular location is the host membrane. This is an uncharacterized protein from Spiroplasma melliferum (SpV1).